The chain runs to 119 residues: Hemerythrin subunit B (119 aa).

Fe cation contacts are provided by His-26, His-55, Glu-59, His-74, His-78, His-107, and Asp-112.

Belongs to the hemerythrin family.

Hemerythrin is a respiratory protein in blood cells of certain marine worms. The oxygen-binding site in each chain contains two iron atoms. The polypeptide is Hemerythrin subunit B (Sipunculus nudus (Sipunculan worm)).